Reading from the N-terminus, the 95-residue chain is Ferredoxin-4 (95 aa).

Residues 2–95 form the 2Fe-2S ferredoxin-type domain; that stretch reads DKATLTFTDV…LGGAVKVRPA (94 aa). [2Fe-2S] cluster contacts are provided by Cys38, Cys43, Cys46, and Cys81.

Belongs to the 2Fe2S plant-type ferredoxin family. Requires [2Fe-2S] cluster as cofactor.

Its function is as follows. Ferredoxins are iron-sulfur proteins that transfer electrons in a wide variety of metabolic reactions. This ferredoxin is required for nitrogen fixation. The polypeptide is Ferredoxin-4 (fdxC) (Rhodobacter capsulatus (Rhodopseudomonas capsulata)).